The primary structure comprises 766 residues: Serine/threonine-protein kinase tousled-like 1 (766 aa).

At M1 the chain carries N-acetylmethionine. A compositionally biased stretch (polar residues) spans 1–19 (MSVQSSSGSLEGPPSWSQL). The segment at 1-197 (MSVQSSSGSL…SPSPTALAFG (197 aa)) is disordered. Positions 20-33 (STSPTPGSAAAARS) are enriched in low complexity. Residue T38 is modified to Phosphothreonine. The segment covering 43-64 (RPREGAMDELHSLDPRRQELLE) has biased composition (basic and acidic residues). Phosphoserine occurs at positions 54, 77, and 80. The segment covering 68-85 (TGVASGSTGSTGSCSVGA) has biased composition (low complexity). The span at 87 to 103 (ASTNNESSNHSFGSLGS) shows a compositional bias: polar residues. Positions 105 to 121 (SDKESETPEKKQSESSR) are enriched in basic and acidic residues. A phosphoserine mark is found at S134, S159, S174, and S176. The segment covering 170 to 192 (SPQNSHSHSTPSSSVRPNSPSPT) has biased composition (low complexity). The stretch at 230–281 (QDLEKKEGRIDDLLRANCDLRRQIDEQQKLLEKYKERLNKCISMSKKLLIEK) forms a coiled coil. The disordered stretch occupies residues 346-383 (LAKRKPPTANNSQAPSTNSEPKQRKNKAVNGAENDPFV). Residues 353-365 (TANNSQAPSTNSE) are compositionally biased toward polar residues. A coiled-coil region spans residues 397-445 (HEQEEIFKLRLGHLKKEEAEIQAELERLERVRNLHIRELKRINNEDNSQ). Positions 456–734 (YLLLHLLGRG…VHQLANDPYL (279 aa)) constitute a Protein kinase domain. Residues 462–470 (LGRGGFSEV) and K485 each bind ATP. Catalysis depends on D586, which acts as the Proton acceptor. The residue at position 743 (S743) is a Phosphoserine.

It belongs to the protein kinase superfamily. Ser/Thr protein kinase family. As to quaternary structure, heterodimer with TLK2. It depends on Mg(2+) as a cofactor. Widely expressed. Present in fetal placenta, liver, kidney and pancreas but not heart or skeletal muscle. Also found in adult cell lines. Isoform 3 is ubiquitously expressed in all tissues examined.

Its subcellular location is the nucleus. The enzyme catalyses L-seryl-[protein] + ATP = O-phospho-L-seryl-[protein] + ADP + H(+). The catalysed reaction is L-threonyl-[protein] + ATP = O-phospho-L-threonyl-[protein] + ADP + H(+). Its activity is regulated as follows. Cell-cycle regulated, maximal activity in S-phase. Inactivated by phosphorylation at Ser-743, potentially by CHEK1. Functionally, rapidly and transiently inhibited by phosphorylation following the generation of DNA double-stranded breaks during S-phase. This is cell cycle checkpoint and ATM-pathway dependent and appears to regulate processes involved in chromatin assembly. Isoform 3 phosphorylates and enhances the stability of the t-SNARE SNAP23, augmenting its assembly with syntaxin. Isoform 3 protects the cells from the ionizing radiation by facilitating the repair of DSBs. In vitro, phosphorylates histone H3 at 'Ser-10'. The sequence is that of Serine/threonine-protein kinase tousled-like 1 (TLK1) from Homo sapiens (Human).